The chain runs to 66 residues: MKPSEIREMSIEEIDKKIRELRLELAKERGVLTMGASMENPMVIRNLRRDIARLLTIKREKLREKR.

This sequence belongs to the universal ribosomal protein uL29 family. As to quaternary structure, part of the 50S ribosomal subunit.

The polypeptide is Large ribosomal subunit protein uL29 (Thermococcus kodakarensis (strain ATCC BAA-918 / JCM 12380 / KOD1) (Pyrococcus kodakaraensis (strain KOD1))).